The chain runs to 677 residues: Sulfate transporter 2.1 (677 aa).

Residues 1–118 (MKERDSESFE…NYKLTMFKND (118 aa)) lie on the Cytoplasmic side of the membrane. The interval 23–54 (STHMIQMAMANSGSSAAAQAGQDQPDRSKWLL) is disordered. Positions 28-44 (QMAMANSGSSAAAQAGQ) are enriched in low complexity. The chain crosses the membrane as a helical span at residues 119–139 (LMAGLTLASLCIPQSIGYATL). Over 140–141 (AK) the chain is Extracellular. The chain crosses the membrane as a helical span at residues 142-162 (LDPQYGLYTSVVPPLIYALMG). Topologically, residues 163-166 (TSRE) are cytoplasmic. A helical membrane pass occupies residues 167 to 187 (IAIGPVAVVSLLISSMLQKLI). Residues 188-198 (DPETDPLGYKK) are Extracellular-facing. A helical membrane pass occupies residues 199 to 219 (LVLTTTFFAGIFQASFGLFRL). The Cytoplasmic segment spans residues 220–221 (GF). Residues 222 to 242 (LVDFLSHAAIVGFMGGAAIVI) traverse the membrane as a helical segment. The Extracellular segment spans residues 243–278 (GLQQLKGLLGITNFTTNTDIVSVLRAVWRSCQQQWS). N255 is a glycosylation site (N-linked (GlcNAc...) asparagine). Residues 279-299 (PHTFILGCSFLSFILITRFIG) form a helical membrane-spanning segment. At 300-304 (KKYKK) the chain is on the cytoplasmic side. The chain crosses the membrane as a helical span at residues 305-325 (LFWLPAIAPLIAVVVSTLMVF). At 326-360 (LTKADEHGVKTVRHIKGGLNPMSIQDLDFNTPHLG) the chain is on the extracellular side. Residues 361 to 381 (QIAKIGLIIAIVALTEAIAVG) form a helical membrane-spanning segment. The Cytoplasmic segment spans residues 382-397 (RSFAGIKGYRLDGNKE). The chain crosses the membrane as a helical span at residues 398 to 418 (MVAIGFMNVLGSFTSCYAATG). At 419–426 (SFSRTAVN) the chain is on the extracellular side. The chain crosses the membrane as a helical span at residues 427-447 (FAAGCETAMSNIVMAVTVFVA). At 448–454 (LECLTRL) the chain is on the cytoplasmic side. A helical transmembrane segment spans residues 455 to 475 (LYYTPIAILASIILSALPGLI). Residues 476 to 490 (NINEAIHIWKVDKFD) are Extracellular-facing. The chain crosses the membrane as a helical span at residues 491–511 (FLALIGAFFGVLFASVEIGLL). Over 512–677 (VAVVISFAKI…ALDACFGLKV (166 aa)) the chain is Cytoplasmic. In terms of domain architecture, STAS spans 548–672 (YPMTVKTPGV…LTIGEALDAC (125 aa)).

It belongs to the SLC26A/SulP transporter (TC 2.A.53) family. As to expression, expressed in root cap, central cylinder of roots and in vascular tissues of leaves.

The protein localises to the membrane. Functionally, low-affinity H(+)/sulfate cotransporter that may be involved in root-to-shoot translocation of sulfate. Plays a central role in the regulation of sulfate assimilation. The protein is Sulfate transporter 2.1 (SULTR2;1) of Arabidopsis thaliana (Mouse-ear cress).